We begin with the raw amino-acid sequence, 526 residues long: Arp2/3 complex-activating protein rickA (526 aa).

A disordered region spans residues 305 to 356 (TTSSIAKPLENNVTPPPPLTKNNIPPPPPPPPLSKNNILPPPPPPMPTMAPA). Over residues 318-352 (TPPPPLTKNNIPPPPPPPPLSKNNILPPPPPPMPT) the composition is skewed to pro residues. WH2 domains lie at 383-400 (DTSD…LRKV) and 410-427 (SRDL…LRKV). 2 disordered regions span residues 425 to 452 (RKVE…SKPN) and 464 to 526 (MEMS…FVRS). Residues 448–484 (VSKPNGVASILARRVAMEMSDSSSSSGSESDSGNWSD) form a central and acidic domains region. The span at 464–480 (MEMSDSSSSSGSESDSG) shows a compositional bias: low complexity. Composition is skewed to polar residues over residues 481 to 491 (NWSDASVNSNK) and 506 to 526 (TTHA…FVRS).

In terms of assembly, homodimer.

The protein localises to the cell surface. Its function is as follows. Recruits and activates the Arp2/3 complex, which in turn leads to actin polymerization, promoting Rickettsia motility during infection. In Rickettsia felis (strain ATCC VR-1525 / URRWXCal2) (Rickettsia azadi), this protein is Arp2/3 complex-activating protein rickA (rickA).